Here is a 277-residue protein sequence, read N- to C-terminus: Release factor glutamine methyltransferase (277 aa).

S-adenosyl-L-methionine is bound by residues 117 to 121, Asp-140, Trp-168, and Asn-183; that span reads GTGTG. 183–186 is a substrate binding site; it reads NPPY.

The protein belongs to the protein N5-glutamine methyltransferase family. PrmC subfamily.

The catalysed reaction is L-glutaminyl-[peptide chain release factor] + S-adenosyl-L-methionine = N(5)-methyl-L-glutaminyl-[peptide chain release factor] + S-adenosyl-L-homocysteine + H(+). Functionally, methylates the class 1 translation termination release factors RF1/PrfA and RF2/PrfB on the glutamine residue of the universally conserved GGQ motif. The chain is Release factor glutamine methyltransferase from Shigella flexneri.